Here is a 429-residue protein sequence, read N- to C-terminus: ATP-dependent RNA helicase RhlB (429 aa).

A Q motif motif is present at residues 9–37; sequence EKFAQMGLEPEVLAGLESKGFHYCTPIQA. One can recognise a Helicase ATP-binding domain in the interval 40–219; that stretch reads LPLLVEGHDL…YEHMNHPEHV (180 aa). An ATP-binding site is contributed by 53-60; that stretch reads AQTGTGKT. The short motif at 165–168 is the DEAD box element; the sequence is DEAD. Positions 243–390 constitute a Helicase C-terminal domain; sequence KMLLLLSLME…VSKYDREALL (148 aa). A disordered region spans residues 395–429; that stretch reads APKRVVRNRQPVNRNMRDRQGGGNSNNRRRPPRKS.

This sequence belongs to the DEAD box helicase family. RhlB subfamily. Component of the RNA degradosome, which is a multiprotein complex involved in RNA processing and mRNA degradation.

The protein localises to the cytoplasm. The enzyme catalyses ATP + H2O = ADP + phosphate + H(+). Its function is as follows. DEAD-box RNA helicase involved in RNA degradation. Has RNA-dependent ATPase activity and unwinds double-stranded RNA. This Aeromonas salmonicida (strain A449) protein is ATP-dependent RNA helicase RhlB.